We begin with the raw amino-acid sequence, 137 residues long: Large ribosomal subunit protein uL16 (137 aa).

This sequence belongs to the universal ribosomal protein uL16 family. In terms of assembly, part of the 50S ribosomal subunit.

Functionally, binds 23S rRNA and is also seen to make contacts with the A and possibly P site tRNAs. The polypeptide is Large ribosomal subunit protein uL16 (Nitratidesulfovibrio vulgaris (strain DSM 19637 / Miyazaki F) (Desulfovibrio vulgaris)).